We begin with the raw amino-acid sequence, 563 residues long: Arginine--tRNA ligase (563 aa).

The 'HIGH' region signature appears at 122–132; that stretch reads PNIAKPMSMGH.

This sequence belongs to the class-I aminoacyl-tRNA synthetase family. As to quaternary structure, monomer.

The protein resides in the cytoplasm. It carries out the reaction tRNA(Arg) + L-arginine + ATP = L-arginyl-tRNA(Arg) + AMP + diphosphate. In Levilactobacillus brevis (strain ATCC 367 / BCRC 12310 / CIP 105137 / JCM 1170 / LMG 11437 / NCIMB 947 / NCTC 947) (Lactobacillus brevis), this protein is Arginine--tRNA ligase.